A 198-amino-acid chain; its full sequence is Superoxide dismutase [Mn], mitochondrial (198 aa).

Histidine 26 serves as a coordination point for Mn(2+). Tyrosine 34 is subject to 3'-nitrotyrosine. An N6-acetyllysine; alternate mark is found at lysine 44 and lysine 51. Lysine 44 and lysine 51 each carry N6-succinyllysine; alternate. Histidine 74 lines the Mn(2+) pocket. Residue lysine 90 is modified to N6-acetyllysine. N6-acetyllysine; alternate occurs at positions 98 and 106. An N6-succinyllysine; alternate mark is found at lysine 98 and lysine 106. Residues aspartate 159 and histidine 163 each contribute to the Mn(2+) site. Lysine 178 is subject to N6-acetyllysine.

It belongs to the iron/manganese superoxide dismutase family. Homotetramer. The cofactor is Mn(2+). Nitrated under oxidative stress. Nitration coupled with oxidation inhibits the catalytic activity. In terms of processing, acetylation at Lys-98 decreases enzymatic activity. Deacetylated by SIRT3 upon exposure to ionizing radiations or after long fasting. Post-translationally, polyubiquitinated; leading to proteasomal degradation. Deubiquitinated by USP36 which increases protein stability.

Its subcellular location is the mitochondrion matrix. It catalyses the reaction 2 superoxide + 2 H(+) = H2O2 + O2. In terms of biological role, destroys superoxide anion radicals which are normally produced within the cells and which are toxic to biological systems. The protein is Superoxide dismutase [Mn], mitochondrial (SOD2) of Pan troglodytes (Chimpanzee).